Consider the following 210-residue polypeptide: Isomeliandiol synthase ISM1 (210 aa).

The next 5 helical transmembrane spans lie at 17–37 (FTLH…TWFI), 50–70 (LLCW…YFVF), 107–127 (IEGM…YAIV), 135–155 (ILQF…FLTA), and 172–192 (YYVG…INFW). In terms of domain architecture, EXPERA spans 46 to 188 (GDRLLLCWWA…IWIIVPSLIA (143 aa)).

This sequence belongs to the EBP family.

The protein resides in the membrane. It catalyses the reaction 7,8-epoxymelianol = isomeliandiol. Its pathway is secondary metabolite biosynthesis; terpenoid biosynthesis. Functionally, isomerase involved in the biosynthesis of limonoids and quassinoids triterpene natural products such as ailanthone, chaparrinone, glaucarubinone and amarolide, allelopathic degraded triterpene lactones inhibiting the growth of other plants, and possessing antimalarial, antifeedant, insecticidal, anti-inflammatory and anticancer activities. Catalyzes the conversion of 7,8-epoxymelianol to isomeliandiol via skeletal rearrangements. The protein is Isomeliandiol synthase ISM1 of Ailanthus altissima (Tree-of-heaven).